A 463-amino-acid chain; its full sequence is O-acetyltransferase SAT5 (463 aa).

The protein belongs to the trichothecene 3-O-acetyltransferase family.

It functions in the pathway mycotoxin biosynthesis. Its function is as follows. O-acetyltransferase; part of the satratoxin SC1 cluster involved in the biosynthesis of satratoxins, trichothecene mycotoxins that are associated with human food poisonings. Satratoxins are suggested to be made by products of multiple gene clusters (SC1, SC2 and SC3) that encode 21 proteins in all, including polyketide synthases, acetyltransferases, and other enzymes expected to modify the trichothecene skeleton. SC1 encodes 10 proteins, SAT1 to SAT10. The largest are SAT8, which encodes a putative polyketide synthase (PKS) with a conventional non-reducing architecture, and SAT10, a putative protein containing four ankyrin repeats and thus may be involved in protein scaffolding. The putative short-chain reductase SAT3 may assist the PKS in some capacity. SAT6 contains a secretory lipase domain and acts probably as a trichothecene esterase. SAT5 encodes a putative acetyltransferase, and so, with SAT6, may affect endogenous protection from toxicity. The probable transcription factor SAT9 may regulate the expression of the SC1 cluster. SC2 encodes proteins SAT11 to SAT16, the largest of which encodes the putative reducing PKS SAT13. SAT11 is a cytochrome P450 monooxygenase, while SAT14 and SAT16 are probable acetyltransferases. The SC2 cluster may be regulated by the transcription factor SAT15. SC3 is a small cluster that encodes 5 proteins, SAT17 to SAT21. SAT21 is a putative MFS-type transporter which may have a role in exporting secondary metabolites. The four other proteins putatively encoded in SC3 include the taurine hydroxylase-like protein SAT17, the O-methyltransferase SAT18, the acetyltransferase SAT19, and the Cys6-type zinc finger SAT20, the latter being probably involved in regulation of SC3 expression. The polypeptide is O-acetyltransferase SAT5 (Stachybotrys chartarum (strain CBS 109288 / IBT 7711) (Toxic black mold)).